A 736-amino-acid polypeptide reads, in one-letter code: Myotubularin-related protein 12 (736 aa).

In terms of domain architecture, Myotubularin phosphatase spans tyrosine 182–phenylalanine 558. The segment at serine 672–glycine 691 is disordered.

The protein belongs to the protein-tyrosine phosphatase family. Non-receptor class myotubularin subfamily. Heterodimer with lipid phosphatase mtm1. In skeletal muscles, the interaction stabilizes both mtmr12 and mtm1 protein levels.

It is found in the cytoplasm. It localises to the sarcoplasmic reticulum. The protein localises to the myofibril. The protein resides in the sarcomere. Its function is as follows. Acts as an adapter for the myotubularin phosphatase mtm1 to regulate mtm1 protein stability and possibly its intracellular location. By stabilizing mtm1 protein levels, required for skeletal muscle maintenance but not for myogenesis. In skeletal muscle cells, does not regulate mtm1 subcellular localization. The chain is Myotubularin-related protein 12 (mtmr12) from Danio rerio (Zebrafish).